Consider the following 947-residue polypeptide: DEAD-box ATP-dependent RNA helicase 45 (947 aa).

Over residues 1–14 (MEEEEVVVVVDEEE) the composition is skewed to acidic residues. Disordered regions lie at residues 1–132 (MEEE…EDEI) and 159–221 (SMPA…EEFM). 2 stretches are compositionally biased toward basic and acidic residues: residues 15–31 (SERR…KRLD) and 42–61 (KEWQ…REQE). A compositionally biased stretch (low complexity) spans 62-82 (AAAGAGTPAAAAGADGDSNAG). Composition is skewed to acidic residues over residues 88–108 (DGEE…EDDG) and 196–219 (DDSD…DDEE). A Q motif motif is present at residues 285-313 (KTWVQSGLTSKLLDTIKKLGFEKPMPIQA). One can recognise a Helicase ATP-binding domain in the interval 316-494 (LPIIMSGRDC…RKVLTKPVEI (179 aa)). 329–336 (AKTGSGKT) is a binding site for ATP. Residues 442-445 (DEAD) carry the DEAD box motif. The 169-residue stretch at 479 to 647 (QVEILARKVL…AVPQDLKGLA (169 aa)) folds into the Helicase C-terminal domain. The disordered stretch occupies residues 658-710 (TEQAHGTGYGGSGFKFNEEEDEARRSAKKAQAREYGYEEDKSDSDSDEEGGVR). Over residues 697-706 (DKSDSDSDEE) the composition is skewed to acidic residues. Residues 854–879 (TELSVKKAKSELKRVLEDCANHALNL) adopt a coiled-coil conformation.

The protein belongs to the DEAD box helicase family. DDX46/PRP5 subfamily.

The enzyme catalyses ATP + H2O = ADP + phosphate + H(+). In Oryza sativa subsp. japonica (Rice), this protein is DEAD-box ATP-dependent RNA helicase 45.